An 87-amino-acid polypeptide reads, in one-letter code: Beta-defensin 109C (87 aa).

The N-terminal stretch at 1-22 (MRLHLLLLILLLFSILLSPVRG) is a signal peptide. 3 cysteine pairs are disulfide-bonded: C31/C59, C38/C53, and C43/C60.

Belongs to the beta-defensin family.

The protein localises to the secreted. In terms of biological role, has antibacterial activity. This Homo sapiens (Human) protein is Beta-defensin 109C (DEFB109C).